Here is a 397-residue protein sequence, read N- to C-terminus: MAKEKFERNKPHVNVGTIGHVDHGKTTLTAALTRVCSEVFGSARVDFDKIDSAPEEKARGITINTAHVEYDSNIRHYAHVDCPGHADYVKNMITGAAQMDGAILVCSAADGPMPQTREHILLSRQVGVPYIVVFLNKADMVDDAELLELVEMEVRDLLSTYDFPGDDTPIIIGSALMALNGEDTNELGTSAVKKLVETLDTYIPEPVRAIDRPFLMPIEDVFSISGRGTVVTGRVERGIVKIQEEIEIVGLRPTTKTTCTGVEMFRKLLDEGRAGENCGVLLRGTKRDEVERGQVLAKPGTIKPHTKFEAEVYVLSKEEGGRHTPFFKGYRPQFYFRTTDVTGSCELPEGVEMVMPGDNIKMVVTLIKPIAMEDGLRFAIREGGRTVGAGVVAKIIE.

The tr-type G domain maps to 10-207 (KPHVNVGTIG…TLDTYIPEPV (198 aa)). The G1 stretch occupies residues 19 to 26 (GHVDHGKT). 19 to 26 (GHVDHGKT) is a GTP binding site. Residue Thr26 participates in Mg(2+) binding. The interval 60-64 (GITIN) is G2. A G3 region spans residues 81–84 (DCPG). Residues 81 to 85 (DCPGH) and 136 to 139 (NKAD) each bind GTP. Residues 136 to 139 (NKAD) are G4. Positions 174–176 (SAL) are G5.

The protein belongs to the TRAFAC class translation factor GTPase superfamily. Classic translation factor GTPase family. EF-Tu/EF-1A subfamily. In terms of assembly, monomer.

Its subcellular location is the cytoplasm. The catalysed reaction is GTP + H2O = GDP + phosphate + H(+). GTP hydrolase that promotes the GTP-dependent binding of aminoacyl-tRNA to the A-site of ribosomes during protein biosynthesis. This Ectopseudomonas mendocina (strain ymp) (Pseudomonas mendocina) protein is Elongation factor Tu.